The primary structure comprises 411 residues: Probable peptidoglycan glycosyltransferase FtsW (411 aa).

The Cytoplasmic segment spans residues 1–40; the sequence is MLERMLPFLGRKRDKAAADLPVRVGHSAPRNSRMLEYDQN. A helical membrane pass occupies residues 41 to 61; the sequence is LVWVTLLLLAYGLVMVYSATI. The Periplasmic segment spans residues 62 to 81; that stretch reads SFHDSPRYAQWSPYHYFIRD. The chain crosses the membrane as a helical span at residues 82 to 102; that stretch reads LFSIAAALLASWIVVQIPMAE. Residues 103 to 109 are Cytoplasmic-facing; the sequence is LQKWSMR. Residues 110–130 form a helical membrane-spanning segment; the sequence is FFFLSLIGLVLVLLPHIGKDV. Residues 131-136 lie on the Periplasmic side of the membrane; that stretch reads NGSKRW. Residues 137–157 form a helical membrane-spanning segment; it reads VVFPGGLNFQPSELVKLTALI. Topologically, residues 158–172 are cytoplasmic; it reads YAADFMVRKQEVKQS. The helical transmembrane segment at 173-193 threads the bilayer; it reads LLKTFLPMMAVMMIVGVLLLA. At 194–196 the chain is on the periplasmic side; that stretch reads EPD. Residues 197–217 form a helical membrane-spanning segment; it reads MGAFLVIASITLAILFLGGAN. The Cytoplasmic segment spans residues 218–219; the sequence is GK. The helical transmembrane segment at 220–240 threads the bilayer; sequence LFSVFSVAVIGAFVLMIVLSP. Topologically, residues 241-298 are periplasmic; the sequence is WRRDRIFAYLNPWSESNALGSAYQLSHALIAMGRGEWFGVGLGGSIEKLHYLPEAHTD. Residues 299–319 form a helical membrane-spanning segment; sequence FLLAIIGEELGLVGVGVVIFA. At 320-347 the chain is on the cytoplasmic side; that stretch reads FYWIVRRAFDIGRQALVLDRMYSALVAQ. A helical transmembrane segment spans residues 348 to 368; that stretch reads GIGVWIGGQAFINIGVNLGLL. Residues 369–374 lie on the Periplasmic side of the membrane; the sequence is PTKGLT. The helical transmembrane segment at 375–395 threads the bilayer; the sequence is LPLMSYGGSALLLNCMAIAVL. Over 396–411 the chain is Cytoplasmic; the sequence is LRVDFENRILMRGGHV.

This sequence belongs to the SEDS family. FtsW subfamily.

The protein localises to the cell inner membrane. It carries out the reaction [GlcNAc-(1-&gt;4)-Mur2Ac(oyl-L-Ala-gamma-D-Glu-L-Lys-D-Ala-D-Ala)](n)-di-trans,octa-cis-undecaprenyl diphosphate + beta-D-GlcNAc-(1-&gt;4)-Mur2Ac(oyl-L-Ala-gamma-D-Glu-L-Lys-D-Ala-D-Ala)-di-trans,octa-cis-undecaprenyl diphosphate = [GlcNAc-(1-&gt;4)-Mur2Ac(oyl-L-Ala-gamma-D-Glu-L-Lys-D-Ala-D-Ala)](n+1)-di-trans,octa-cis-undecaprenyl diphosphate + di-trans,octa-cis-undecaprenyl diphosphate + H(+). It participates in cell wall biogenesis; peptidoglycan biosynthesis. Its function is as follows. Peptidoglycan polymerase that is essential for cell division. This chain is Probable peptidoglycan glycosyltransferase FtsW, found in Thiomonas intermedia (strain K12) (Thiobacillus intermedius).